Here is a 156-residue protein sequence, read N- to C-terminus: Small ribosomal subunit protein uS7 (156 aa).

This sequence belongs to the universal ribosomal protein uS7 family. As to quaternary structure, part of the 30S ribosomal subunit. Contacts proteins S9 and S11.

In terms of biological role, one of the primary rRNA binding proteins, it binds directly to 16S rRNA where it nucleates assembly of the head domain of the 30S subunit. Is located at the subunit interface close to the decoding center, probably blocks exit of the E-site tRNA. The protein is Small ribosomal subunit protein uS7 of Trichormus variabilis (strain ATCC 29413 / PCC 7937) (Anabaena variabilis).